Consider the following 243-residue polypeptide: Venom nerve growth factor (243 aa).

A signal peptide spans 1–18 (MSMLCYTLIIAFLIGIWA). The propeptide occupies 19 to 125 (APKSEDNVPL…TLNRNIWANN (107 aa)). Residues 47–66 (GLKTSRNTDQHHPTPKKSED) are compositionally biased toward basic and acidic residues. Positions 47-70 (GLKTSRNTDQHHPTPKKSEDQELG) are disordered. Disulfide bonds link C139–C204, C182–C232, and C192–C234. N148 carries an N-linked (GlcNAc...) asparagine glycan.

The protein belongs to the NGF-beta family. Homodimer. In terms of tissue distribution, expressed by the venom gland.

The protein localises to the secreted. Functionally, nerve growth factor is important for the development and maintenance of the sympathetic and sensory nervous systems. It stimulates division and differentiation of sympathetic and embryonic sensory neurons as well as basal forebrain cholinergic neurons in the brain. Its relevance in the snake venom is not clear. However, it has been shown to inhibit metalloproteinase-dependent proteolysis of platelet glycoprotein Ib alpha, suggesting a metalloproteinase inhibition to prevent metalloprotease autodigestion and/or protection against prey proteases. Binds a lipid between the two protein chains in the homodimer. The lipid-bound form promotes histamine relase from mouse mast cells, contrary to the lipid-free form. The protein is Venom nerve growth factor of Bungarus multicinctus (Many-banded krait).